We begin with the raw amino-acid sequence, 235 residues long: NADH-quinone oxidoreductase subunit C (235 aa).

It belongs to the complex I 30 kDa subunit family. In terms of assembly, NDH-1 is composed of 14 different subunits. Subunits NuoB, C, D, E, F, and G constitute the peripheral sector of the complex.

It is found in the cell membrane. It carries out the reaction a quinone + NADH + 5 H(+)(in) = a quinol + NAD(+) + 4 H(+)(out). NDH-1 shuttles electrons from NADH, via FMN and iron-sulfur (Fe-S) centers, to quinones in the respiratory chain. The immediate electron acceptor for the enzyme in this species is believed to be a menaquinone. Couples the redox reaction to proton translocation (for every two electrons transferred, four hydrogen ions are translocated across the cytoplasmic membrane), and thus conserves the redox energy in a proton gradient. The polypeptide is NADH-quinone oxidoreductase subunit C (Mycobacterium avium (strain 104)).